The chain runs to 340 residues: Ketol-acid reductoisomerase (NADP(+)) (340 aa).

One can recognise a KARI N-terminal Rossmann domain in the interval 3–182; it reads VTMYYEEDVE…GCARVGIIET (180 aa). NADP(+) contacts are provided by residues 26-29, Arg49, Ser53, and 83-86; these read YGSQ and DELQ. His108 is a catalytic residue. Residue Gly134 participates in NADP(+) binding. The KARI C-terminal knotted domain maps to 183-328; that stretch reads TFKEETEEDL…AELRKAMPFT (146 aa). Residues Asp191, Glu195, Glu227, and Glu231 each contribute to the Mg(2+) site. Ser252 contacts substrate.

It belongs to the ketol-acid reductoisomerase family. Requires Mg(2+) as cofactor.

The catalysed reaction is (2R)-2,3-dihydroxy-3-methylbutanoate + NADP(+) = (2S)-2-acetolactate + NADPH + H(+). It catalyses the reaction (2R,3R)-2,3-dihydroxy-3-methylpentanoate + NADP(+) = (S)-2-ethyl-2-hydroxy-3-oxobutanoate + NADPH + H(+). It functions in the pathway amino-acid biosynthesis; L-isoleucine biosynthesis; L-isoleucine from 2-oxobutanoate: step 2/4. It participates in amino-acid biosynthesis; L-valine biosynthesis; L-valine from pyruvate: step 2/4. In terms of biological role, involved in the biosynthesis of branched-chain amino acids (BCAA). Catalyzes an alkyl-migration followed by a ketol-acid reduction of (S)-2-acetolactate (S2AL) to yield (R)-2,3-dihydroxy-isovalerate. In the isomerase reaction, S2AL is rearranged via a Mg-dependent methyl migration to produce 3-hydroxy-3-methyl-2-ketobutyrate (HMKB). In the reductase reaction, this 2-ketoacid undergoes a metal-dependent reduction by NADPH to yield (R)-2,3-dihydroxy-isovalerate. The protein is Ketol-acid reductoisomerase (NADP(+)) of Lactococcus lactis subsp. cremoris (strain MG1363).